Consider the following 1766-residue polypeptide: DNA-directed RNA polymerase II subunit RPB1-A (1766 aa).

Zn(2+) is bound by residues C69, C72, C79, and H82. Residues D487, D489, and D491 each contribute to the Mg(2+) site. The bridging helix stretch occupies residues 813–825 (PHEFFFHTMAGRE). Residues 1660–1766 (HAMSSAAPPS…EFGDEEEEEQ (107 aa)) form a disordered region. Residues 1706–1716 (RGDEPSTHRSD) show a composition bias toward basic and acidic residues. A compositionally biased stretch (low complexity) spans 1742–1756 (PTAKTPQQAAPPTAA).

Belongs to the RNA polymerase beta' chain family. Component of the RNA polymerase II (Pol II) complex consisting of 12 subunits.

It is found in the nucleus. The catalysed reaction is RNA(n) + a ribonucleoside 5'-triphosphate = RNA(n+1) + diphosphate. Its function is as follows. DNA-dependent RNA polymerase catalyzes the transcription of DNA into RNA using the four ribonucleoside triphosphates as substrates. Largest and catalytic component of RNA polymerase II which synthesizes mRNA precursors and many functional non-coding RNAs. Forms the polymerase active center together with the second largest subunit. Pol II is the central component of the basal RNA polymerase II transcription machinery. It is composed of mobile elements that move relative to each other. RPB1 is part of the core element with the central large cleft, the clamp element that moves to open and close the cleft and the jaws that are thought to grab the incoming DNA template. At the start of transcription, a single-stranded DNA template strand of the promoter is positioned within the central active site cleft of Pol II. A bridging helix emanates from RPB1 and crosses the cleft near the catalytic site and is thought to promote translocation of Pol II by acting as a ratchet that moves the RNA-DNA hybrid through the active site by switching from straight to bent conformations at each step of nucleotide addition. During transcription elongation, Pol II moves on the template as the transcript elongates. The protein is DNA-directed RNA polymerase II subunit RPB1-A (TRP4.8) of Trypanosoma brucei brucei.